The primary structure comprises 310 residues: Ribosomal protein uL3 glutamine methyltransferase (310 aa).

Belongs to the protein N5-glutamine methyltransferase family. PrmB subfamily.

It catalyses the reaction L-glutaminyl-[ribosomal protein uL3] + S-adenosyl-L-methionine = N(5)-methyl-L-glutaminyl-[ribosomal protein uL3] + S-adenosyl-L-homocysteine + H(+). Specifically methylates large ribosomal subunit protein uL3 on 'Gln-150'. This is Ribosomal protein uL3 glutamine methyltransferase from Salmonella typhi.